The primary structure comprises 140 residues: Nucleoside diphosphate kinase (140 aa).

ATP contacts are provided by lysine 11, phenylalanine 59, arginine 87, threonine 93, arginine 104, and asparagine 114. Histidine 117 functions as the Pros-phosphohistidine intermediate in the catalytic mechanism.

This sequence belongs to the NDK family. In terms of assembly, homotetramer. Mg(2+) serves as cofactor.

It is found in the cytoplasm. It catalyses the reaction a 2'-deoxyribonucleoside 5'-diphosphate + ATP = a 2'-deoxyribonucleoside 5'-triphosphate + ADP. The enzyme catalyses a ribonucleoside 5'-diphosphate + ATP = a ribonucleoside 5'-triphosphate + ADP. Major role in the synthesis of nucleoside triphosphates other than ATP. The ATP gamma phosphate is transferred to the NDP beta phosphate via a ping-pong mechanism, using a phosphorylated active-site intermediate. The sequence is that of Nucleoside diphosphate kinase from Methylocella silvestris (strain DSM 15510 / CIP 108128 / LMG 27833 / NCIMB 13906 / BL2).